We begin with the raw amino-acid sequence, 330 residues long: Phosphate acyltransferase (330 aa).

The protein belongs to the PlsX family. In terms of assembly, homodimer. Probably interacts with PlsY.

Its subcellular location is the cytoplasm. It catalyses the reaction a fatty acyl-[ACP] + phosphate = an acyl phosphate + holo-[ACP]. It participates in lipid metabolism; phospholipid metabolism. Its function is as follows. Catalyzes the reversible formation of acyl-phosphate (acyl-PO(4)) from acyl-[acyl-carrier-protein] (acyl-ACP). This enzyme utilizes acyl-ACP as fatty acyl donor, but not acyl-CoA. The protein is Phosphate acyltransferase of Streptococcus pneumoniae (strain JJA).